We begin with the raw amino-acid sequence, 265 residues long: 4-hydroxy-2-oxo-heptane-1,7-dioate aldolase (265 aa).

H45 acts as the Proton acceptor in catalysis. Position 147 (Q147) interacts with substrate. E149 serves as a coordination point for a divalent metal cation. Positions 174 and 175 each coordinate substrate. An a divalent metal cation-binding site is contributed by D175.

The protein belongs to the HpcH/HpaI aldolase family. In terms of assembly, homohexamer; trimer of dimers. Requires a divalent metal cation as cofactor.

The catalysed reaction is 4-hydroxy-2-oxoheptanedioate = succinate semialdehyde + pyruvate. The protein operates within aromatic compound metabolism; 4-hydroxyphenylacetate degradation; pyruvate and succinate semialdehyde from 4-hydroxyphenylacetate: step 7/7. Functionally, catalyzes the reversible retro-aldol cleavage of 4-hydroxy-2-ketoheptane-1,7-dioate (HKHD) to pyruvate and succinic semialdehyde. The polypeptide is 4-hydroxy-2-oxo-heptane-1,7-dioate aldolase (Klebsiella pneumoniae subsp. pneumoniae (strain ATCC 700721 / MGH 78578)).